We begin with the raw amino-acid sequence, 413 residues long: MLPWTVIGLALSLRLARSGAERGLPASALQGDLLFLLDSSASVSHYEFNRVREFLGRLAALLPVGPGALRASLVHVGSRPHTEFPFGQHSSGSAVQDAIRAAAQRMGDTNTGLALAYAKKQLFAKAAGARPGVPKVLVWVTDGGSSDPVGPPMQELKDLGVTVFIVSTGRGNLLELSAAASAPAEKHLHFVDVDDLHIITQALRGSILDAMWPQQLHASEVTSSGFRLAWPSLLTADSGYYVLELAPSTDPGAARRQQLPGNATGWAWTGLDSDTDYDVALVPESNVRLLRSQHLRVRTLPEETGPELIVVSHTRPRSLRVSWAPALGPDAALGYHVQVGPLRGGAAQSVEVPAGENSTTLQGLAPGTAYLVTVTAAFRSGRERALSAKACTPEGERSRAPRPQPQRTGGREP.

The N-terminal stretch at 1 to 20 is a signal peptide; that stretch reads MLPWTVIGLALSLRLARSGA. The VWFA domain maps to 32–211; sequence DLLFLLDSSA…ALRGSILDAM (180 aa). A phosphoserine mark is found at Ser-72, Ser-78, and Ser-91. 2 consecutive Fibronectin type-III domains span residues 212-302 and 305-395; these read WPQQ…TLPE and GPEL…TPEG. The N-linked (GlcNAc...) asparagine glycan is linked to Asn-262. Residues 385–413 are disordered; sequence ALSAKACTPEGERSRAPRPQPQRTGGREP.

In terms of assembly, homodimer or homomultimer; disulfide-linked. Interacts with HSPG2. N-glycosylated.

Its subcellular location is the secreted. It localises to the extracellular space. The protein resides in the extracellular matrix. It is found in the basement membrane. In terms of biological role, promotes matrix assembly. Involved in the organization of skeletal muscles and in the formation of neuromuscular junctions. This is von Willebrand factor A domain-containing protein 1 (VWA1) from Bos taurus (Bovine).